The chain runs to 103 residues: uncharacterized protein (103 aa).

It is found in the mitochondrion. This is an uncharacterized protein from Claviceps purpurea (Ergot fungus).